Reading from the N-terminus, the 161-residue chain is Cap-associated protein CAF20 (161 aa).

Residues His52–Pro72 are compositionally biased toward basic residues. The tract at residues His52–Pro108 is disordered. Phosphoserine occurs at positions 78 and 91. 3 positions are modified to phosphothreonine: Thr99, Thr101, and Thr102. Ser154 bears the Phosphoserine mark.

It belongs to the CAF20 family. As to quaternary structure, interacts with TIF45. Phosphorylated by casein kinase II complex (CK2).

Its subcellular location is the cytoplasm. Its function is as follows. Acts as an inhibitor of cap-dependent translation. Competes with eIF4G1/TIF4631 and EAP1 for binding to eIF4E/TIF45 and interferes with the formation of the eIF4F complex, inhibiting translation and stabilizing mRNA. Binding affinity for eIF4E/TIF45 is 10-fold less than that of eIF4G1/TIF4631. Required for induction of pseudohyphal growth in response to nitrogen limitation, probably by regulating STE12 translation. The polypeptide is Cap-associated protein CAF20 (CAF20) (Saccharomyces cerevisiae (strain YJM789) (Baker's yeast)).